A 481-amino-acid polypeptide reads, in one-letter code: MSYELVVGLEVHCQLNTNSKAFCGCSTEFGKPANTNVCPVCLALPGALPVLNQRVVDDAIKLGMSTGCSIAPHSVLARKNYFYPDLPKGYQISQFEEPICLEGCLSIDAGEGQRDIRLIRIHIEEDAGKSIHDIGDDTFIDANRSGVPLLEIVSYPDIRSSKEASAYLQKLRQIVKYLGISDGNMEEGSLRCDANVSMRPRGESEYGTRTEIKNMNSFKSVEKAIEYEAQRHIDVLEAGGTIVQETRLWDADKLETRSMRGKEFSHDYRYFPDPDLVPIAVDDAMLDRLRKELPEFPEARAARFVEEYDIPPYDAGVLTAEREIADYFEETVRVSGDGKAASNWVMGEVLRTLKEKYIPIASFTISPERLGELIGLIAKGTISNTIAKQVFEKMQELDEGPQEIVRKEGLAQVSDTGAIEGVVQEIIDANPAQVEQYRSGKTRIFGFFVGQCMKEMKGKANPAVVNDILKQKLDEGMTGDA.

This sequence belongs to the GatB/GatE family. GatB subfamily. Heterotrimer of A, B and C subunits.

The catalysed reaction is L-glutamyl-tRNA(Gln) + L-glutamine + ATP + H2O = L-glutaminyl-tRNA(Gln) + L-glutamate + ADP + phosphate + H(+). It carries out the reaction L-aspartyl-tRNA(Asn) + L-glutamine + ATP + H2O = L-asparaginyl-tRNA(Asn) + L-glutamate + ADP + phosphate + 2 H(+). Functionally, allows the formation of correctly charged Asn-tRNA(Asn) or Gln-tRNA(Gln) through the transamidation of misacylated Asp-tRNA(Asn) or Glu-tRNA(Gln) in organisms which lack either or both of asparaginyl-tRNA or glutaminyl-tRNA synthetases. The reaction takes place in the presence of glutamine and ATP through an activated phospho-Asp-tRNA(Asn) or phospho-Glu-tRNA(Gln). The protein is Aspartyl/glutamyl-tRNA(Asn/Gln) amidotransferase subunit B of Prosthecochloris aestuarii (strain DSM 271 / SK 413).